Here is a 415-residue protein sequence, read N- to C-terminus: uncharacterized protein (415 aa).

This is an uncharacterized protein from Rickettsia prowazekii (strain Madrid E).